The sequence spans 334 residues: Biotin synthase (334 aa).

The region spanning 54-281 (QAIQLSTLLS…KSYVRLSAGR (228 aa)) is the Radical SAM core domain. 3 residues coordinate [4Fe-4S] cluster: Cys-69, Cys-73, and Cys-76. Positions 113, 144, 204, and 276 each coordinate [2Fe-2S] cluster.

This sequence belongs to the radical SAM superfamily. Biotin synthase family. In terms of assembly, homodimer. It depends on [4Fe-4S] cluster as a cofactor. Requires [2Fe-2S] cluster as cofactor.

It catalyses the reaction (4R,5S)-dethiobiotin + (sulfur carrier)-SH + 2 reduced [2Fe-2S]-[ferredoxin] + 2 S-adenosyl-L-methionine = (sulfur carrier)-H + biotin + 2 5'-deoxyadenosine + 2 L-methionine + 2 oxidized [2Fe-2S]-[ferredoxin]. Its pathway is cofactor biosynthesis; biotin biosynthesis; biotin from 7,8-diaminononanoate: step 2/2. Functionally, catalyzes the conversion of dethiobiotin (DTB) to biotin by the insertion of a sulfur atom into dethiobiotin via a radical-based mechanism. The polypeptide is Biotin synthase (Haemophilus ducreyi (strain 35000HP / ATCC 700724)).